Reading from the N-terminus, the 190-residue chain is Threonylcarbamoyl-AMP synthase (190 aa).

The 184-residue stretch at 7–190 (TGSSAAVVDL…ALTGELFRQG (184 aa)) folds into the YrdC-like domain.

The protein belongs to the SUA5 family. TsaC subfamily.

Its subcellular location is the cytoplasm. The catalysed reaction is L-threonine + hydrogencarbonate + ATP = L-threonylcarbamoyladenylate + diphosphate + H2O. Required for the formation of a threonylcarbamoyl group on adenosine at position 37 (t(6)A37) in tRNAs that read codons beginning with adenine. Catalyzes the conversion of L-threonine, HCO(3)(-)/CO(2) and ATP to give threonylcarbamoyl-AMP (TC-AMP) as the acyladenylate intermediate, with the release of diphosphate. The chain is Threonylcarbamoyl-AMP synthase from Salmonella typhi.